We begin with the raw amino-acid sequence, 1080 residues long: Adenylate cyclase type 7 (1080 aa).

Residues 1 to 33 (MPAKGRYFLNEGEEGPDQDALYEKYQLTSQHGP) are Cytoplasmic-facing. 6 consecutive transmembrane segments (helical) span residues 34–54 (LLLTLLLVAATACVALIIIAF), 63–83 (QAILGMAFLVLAVFAALSVLM), 95–117 (ALALLTWACLVALGYVLVFDAWT), 122–142 (AWEQVPFFLFIVFVVYTLLPF), 147–167 (AVAVGAVSTASHLLVLGSLMG), and 176–196 (VGLQLLANAVIFLCGNLTGAF). At 197–594 (HKHQMQDASR…YRLAPIPRAR (398 aa)) the chain is on the cytoplasmic side. The Guanylate cyclase 1 domain maps to 279–406 (SILYADIVGF…HDVSLANRME (128 aa)). Residues D284, I285, and D328 each contribute to the Mg(2+) site. Residues 284–289 (DIVGFT), 326–328 (LGD), and R372 contribute to the ATP site. A disordered region spans residues 454-474 (DPRSQQPPPPSQHLPRPKGDA). The mediates regulation of adenylate cyclase activity by C5 alpha-induced G- beta and gamma pathway stretch occupies residues 477-482 (KMRASV). The interval 491-499 (WGAARPFAH) is mediates regulation of adenylate cyclase activity by sphingosine 1-phosphate-induced G alpha 13 pathway. Residues 504-546 (ESVSSGETHVPNGRRPKSVPQRHRRTPDRSMSPKGRSEDDSYD) form a disordered region. Residues 506 to 584 (VSSGETHVPN…IFLEKGFERE (79 aa)) are modulates adenylate cyclase activity by modulating the binding of G(s)alpha to the high-affinity G(s)alpha binding site in 7C1a/7C2. The segment covering 515–529 (NGRRPKSVPQRHRRT) has biased composition (basic residues). 3 consecutive transmembrane segments (helical) span residues 595–615 (HDFACASLIFVCILLVHVLLM), 620–640 (ALGVSFGLVACVLGLVLGLCF), and 669–688 (LTLAVLTIGSLLTVAIINLP). N701 carries N-linked (GlcNAc...) asparagine glycosylation. Helical transmembrane passes span 718–737 (PLPYYTCSCVLGFIACSVFL) and 746–773 (VLLTVALVAYLVLFNLSPCWQWDCCGQG). N776 and N781 each carry an N-linked (GlcNAc...) asparagine glycan. Residues 794-814 (DLKTMTNFYLVLFYITLLTLS) form a helical membrane-spanning segment. Topologically, residues 815–1080 (RQIDYYCRLD…TAKFQGLGLN (266 aa)) are cytoplasmic. Residues 879 to 1023 (CVMFASVPDF…NTVNVASRME (145 aa)) form the Guanylate cyclase 2 domain. Residues K931, 1010–1012 (DIW), 1017–1021 (NVASR), and K1057 contribute to the ATP site.

The protein belongs to the adenylyl cyclase class-4/guanylyl cyclase family. The cofactor is Mg(2+). Mn(2+) serves as cofactor. In terms of processing, phosphorylated by PRKCD.

The protein localises to the membrane. The enzyme catalyses ATP = 3',5'-cyclic AMP + diphosphate. Activated by the G protein alpha subunit. Activated by the G protein beta and gamma subunit complex. Activated by GNA13 and GNA12. Ethanol and phorbol 12,13-dibutanoate significantly potentiate adenylate cyclase activity generated in response to the activation of the prostanoid receptor by the agonist prostaglandin E1(1-) in a PKC-dependent manner. Inhibited by lithium. In terms of biological role, catalyzes the formation of cAMP in response to activation of G protein-coupled receptors. Functions in signaling cascades activated namely by thrombin and sphingosine 1-phosphate and mediates regulation of cAMP synthesis through synergistic action of the stimulatory G alpha protein with GNA13. Also, during inflammation, mediates zymosan-induced increase intracellular cAMP, leading to protein kinase A pathway activation in order to modulate innate immune responses through heterotrimeric G proteins G(12/13). Functions in signaling cascades activated namely by dopamine and C5 alpha chain and mediates regulation of cAMP synthesis through synergistic action of the stimulatory G protein with G beta:gamma complex. Functions, through cAMP response regulation, to keep inflammation under control during bacterial infection by sensing the presence of serum factors, such as the bioactive lysophospholipid (LPA) that regulate LPS-induced TNF-alpha production. However, it is also required for the optimal functions of B and T cells during adaptive immune responses by regulating cAMP synthesis in both B and T cells. In Homo sapiens (Human), this protein is Adenylate cyclase type 7.